Consider the following 160-residue polypeptide: Periplasmic nitrate reductase, electron transfer subunit (160 aa).

The signal sequence occupies residues 1–25 (MKTRIIFAALALAAAMPLLVSGVFA). Residues histidine 73, cysteine 87, cysteine 90, histidine 91, histidine 108, cysteine 127, cysteine 130, and histidine 131 each coordinate heme c.

The protein belongs to the NapB family. In terms of assembly, component of the periplasmic nitrate reductase NapAB complex composed of NapA and NapB. In terms of processing, binds 2 heme C groups per subunit.

It is found in the periplasm. In terms of biological role, electron transfer subunit of the periplasmic nitrate reductase complex NapAB. Receives electrons from the membrane-anchored tetraheme c-type NapC protein and transfers these to NapA subunit, thus allowing electron flow between membrane and periplasm. Essential for periplasmic nitrate reduction with nitrate as the terminal electron acceptor. The sequence is that of Periplasmic nitrate reductase, electron transfer subunit from Azospirillum brasilense.